The sequence spans 99 residues: 10 kDa heat shock protein, mitochondrial (99 aa).

It belongs to the GroES chaperonin family. As to quaternary structure, homoheptamer arranged in a ring structure. 2 heptameric Hsp10 rings interact with a Hsp60 tetradecamer in the structure of a back-to-back double heptameric ring to form the symmetrical football complex.

Its subcellular location is the mitochondrion matrix. In terms of biological role, co-chaperonin implicated in mitochondrial protein import and macromolecular assembly. Together with Hsp60, facilitates the correct folding of imported proteins. May also prevent misfolding and promote the refolding and proper assembly of unfolded polypeptides generated under stress conditions in the mitochondrial matrix. The functional units of these chaperonins consist of heptameric rings of the large subunit Hsp60, which function as a back-to-back double ring. In a cyclic reaction, Hsp60 ring complexes bind one unfolded substrate protein per ring, followed by the binding of ATP and association with 2 heptameric rings of the co-chaperonin Hsp10. This leads to sequestration of the substrate protein in the inner cavity of Hsp60 where, for a certain period of time, it can fold undisturbed by other cell components. Synchronous hydrolysis of ATP in all Hsp60 subunits results in the dissociation of the chaperonin rings and the release of ADP and the folded substrate protein. This chain is 10 kDa heat shock protein, mitochondrial (hspe1), found in Oryzias latipes (Japanese rice fish).